The following is a 1025-amino-acid chain: Leucyl-cystinyl aminopeptidase (1025 aa).

N-acetylmethionine is present on Met1. Residues Met1 to Thr110 lie on the Cytoplasmic side of the membrane. The Dileucine internalization motif signature appears at Leu53–Leu54. Tyr70 is modified (phosphotyrosine). Residues Leu76–Leu77 carry the Dileucine internalization motif motif. 2 positions are modified to phosphoserine: Ser80 and Ser91. Residues Arg96–Gly101 are tankyrase binding. The chain crosses the membrane as a helical; Signal-anchor for type II membrane protein span at residues Met111 to Leu131. At Pro132–Leu1025 the chain is on the extracellular side. 5 N-linked (GlcNAc...) asparagine glycosylation sites follow: Asn145, Asn184, Asn215, Asn256, and Asn266. Position 295 (Glu295) interacts with substrate. Residues Asn368 and Asn374 are each glycosylated (N-linked (GlcNAc...) asparagine). Gly428–Asn432 serves as a coordination point for substrate. N-linked (GlcNAc...) asparagine glycosylation occurs at Asn448. His464 provides a ligand contact to Zn(2+). Residue Glu465 is the Proton acceptor of the active site. Zn(2+)-binding residues include His468 and Glu487. N-linked (GlcNAc...) asparagine glycosylation is found at Asn525, Asn578, Asn598, Asn664, Asn682, Asn760, Asn834, Asn850, and Asn989.

The protein belongs to the peptidase M1 family. In terms of assembly, homodimer. Binds tankyrases 1 and 2. Zn(2+) serves as cofactor. The pregnancy serum form is derived from the membrane-bound form by proteolytic processing. Post-translationally, N-glycosylated. In terms of tissue distribution, highly expressed in placenta, heart, kidney and small intestine. Detected at lower levels in neuronal cells in the brain, in skeletal muscle, spleen, liver, testes and colon.

The protein localises to the cell membrane. The protein resides in the secreted. The enzyme catalyses Release of an N-terminal amino acid, Cys-|-Xaa-, in which the half-cystine residue is involved in a disulfide loop, notably in oxytocin or vasopressin. Hydrolysis rates on a range of aminoacyl arylamides exceed that for the cystinyl derivative, however.. Release of an N-terminal amino acid, cleaves before cysteine, leucine as well as other amino acids. Degrades peptide hormones such as oxytocin, vasopressin and angiotensin III, and plays a role in maintaining homeostasis during pregnancy. May be involved in the inactivation of neuronal peptides in the brain. Cleaves Met-enkephalin and dynorphin. Binds angiotensin IV and may be the angiotensin IV receptor in the brain. The protein is Leucyl-cystinyl aminopeptidase (LNPEP) of Homo sapiens (Human).